The following is a 429-amino-acid chain: Adenosylhomocysteinase (429 aa).

Thr64, Asp136, and Glu161 together coordinate substrate. 162-164 (TTT) lines the NAD(+) pocket. Lys191 and Asp195 together coordinate substrate. NAD(+)-binding positions include Asn196, 225 to 230 (GYGWCG), Glu248, Asn283, 304 to 306 (SGH), and Asn351.

This sequence belongs to the adenosylhomocysteinase family. The cofactor is NAD(+).

The protein localises to the cytoplasm. It catalyses the reaction S-adenosyl-L-homocysteine + H2O = L-homocysteine + adenosine. Its pathway is amino-acid biosynthesis; L-homocysteine biosynthesis; L-homocysteine from S-adenosyl-L-homocysteine: step 1/1. In terms of biological role, may play a key role in the regulation of the intracellular concentration of adenosylhomocysteine. This chain is Adenosylhomocysteinase, found in Thermosynechococcus vestitus (strain NIES-2133 / IAM M-273 / BP-1).